The following is a 228-amino-acid chain: Core-capsid bridging protein (228 aa).

Positions 146 to 177 (ARPPAARISPPRRRRRRRRSPRPRATAAYRSS) are disordered. Residues 155–167 (PPRRRRRRRRSPR) show a composition bias toward basic residues. A compositionally biased stretch (low complexity) spans 168-177 (PRATAAYRSS).

It belongs to the adenoviridae core-capsid bridging protein family. Monomer. Homodimer. Exists in equilibrium between monomers and dimers in solution. Interacts with the histone-like nucleoprotein; this interactions bridge the virus core to the capsid. Interacts with core protein X; this interactions bridge the virus core to the capsid. Interacts with the endosome lysis protein VI; this interactions bridge the virus core to the capsid. Interacts with the peripentonal hexons. Interacts with host NPM1; this interaction might play a role in virus assembly.

It is found in the virion. Its subcellular location is the host nucleus. The protein resides in the host nucleolus. Functionally, associates loosely with the viral DNA to form an outer shell around the nucleoprotein-DNA complex and links it with the capsid by binding the endosome lysis protein. Dissociates from the viral genome during entry. Might be involved in nuclear capsid assembly of the viral particles through its association with NPM1/nucleophosmin. The polypeptide is Core-capsid bridging protein (Murine adenovirus A serotype 1 (MAdV-1)).